The sequence spans 431 residues: Probable carboxylic ester hydrolase LipM (431 aa).

A run of 3 helical transmembrane segments spans residues 7 to 27 (IHVI…AATI), 38 to 58 (FASL…LPTL), and 75 to 95 (PVRA…LNLS). Residues Ser261, Asp357, and His390 contribute to the active site.

Belongs to the 'GDXG' lipolytic enzyme family.

It is found in the membrane. The protein is Probable carboxylic ester hydrolase LipM of Mycobacterium tuberculosis (strain ATCC 25618 / H37Rv).